We begin with the raw amino-acid sequence, 292 residues long: Keratin-associated protein 10-9 (292 aa).

25 repeat units span residues 26–30 (CCEPP), 31–35 (CCATS), 36–40 (CCAPA), 57–61 (CCQVT), 79–83 (CCQQS), 99–103 (CCVPV), 104–108 (CCKPV), 109–113 (CCVPV), 114–118 (CCGAS), 120–124 (CCQQS), 130–134 (CCASS), 140–144 (CCVPV), 145–149 (CCKPV), 150–154 (CCAPT), 162–166 (CCQQS), 172–176 (CCTSS), 182–186 (YCVPV), 187–191 (CCKPV), 192–196 (CCKPI), 197–201 (CCVPV), 209–213 (CCQQS), 219–223 (CCTTS), 224–228 (CCRPS), 243–247 (CCVPV), and 250–254 (CCAPT). Residues 26–254 (CCEPPCCATS…VPVSSCCAPT (229 aa)) form a 25 X 5 AA repeats of C-C-X(3) region.

Belongs to the KRTAP type 10 family. In terms of assembly, interacts with hair keratins. As to expression, restricted to a narrow region of the hair fiber cuticle, lying approximately 20 cell layers above the apex of the dermal papilla of the hair root; not detected in any other tissues.

Functionally, in the hair cortex, hair keratin intermediate filaments are embedded in an interfilamentous matrix, consisting of hair keratin-associated proteins (KRTAP), which are essential for the formation of a rigid and resistant hair shaft through their extensive disulfide bond cross-linking with abundant cysteine residues of hair keratins. The matrix proteins include the high-sulfur and high-glycine-tyrosine keratins. This chain is Keratin-associated protein 10-9 (KRTAP10-9), found in Homo sapiens (Human).